The chain runs to 807 residues: Glycerol-3-phosphate acyltransferase (807 aa).

The short motif at 308–313 (CHRSHM) is the HXXXXD motif element.

This sequence belongs to the GPAT/DAPAT family.

The protein resides in the cell inner membrane. The catalysed reaction is sn-glycerol 3-phosphate + an acyl-CoA = a 1-acyl-sn-glycero-3-phosphate + CoA. Its pathway is phospholipid metabolism; CDP-diacylglycerol biosynthesis; CDP-diacylglycerol from sn-glycerol 3-phosphate: step 1/3. This Shewanella baltica (strain OS223) protein is Glycerol-3-phosphate acyltransferase.